The following is a 477-amino-acid chain: Salivary plasminogen activator alpha 2 (477 aa).

The N-terminal stretch at 1–36 is a signal peptide; sequence MVNTMKTKLLCVLLLCGAVFSLPRQETYRQLARGSR. In terms of domain architecture, Fibronectin type-I spans 40–82; the sequence is VACRDEKTQMIYQQQESWLRPEVRSKRVEHCRCDRGLAQCHTV. 14 disulfides stabilise this stretch: cysteine 42-cysteine 72, cysteine 70-cysteine 79, cysteine 87-cysteine 98, cysteine 92-cysteine 109, cysteine 111-cysteine 120, cysteine 128-cysteine 209, cysteine 149-cysteine 191, cysteine 180-cysteine 204, cysteine 214-cysteine 345, cysteine 257-cysteine 273, cysteine 265-cysteine 334, cysteine 359-cysteine 434, cysteine 391-cysteine 407, and cysteine 424-cysteine 452. The EGF-like domain maps to 83-121; that stretch reads PVKSCSELRCFNGGTCWQAASFSDFVCQCPKGYTGKQCE. The Kringle domain maps to 128-209; that stretch reads CYKDQGVTYR…ILEFCSVPVC (82 aa). Residue asparagine 185 is glycosylated (N-linked (GlcNAc...) asparagine). Residues 226-476 form the Peptidase S1 domain; the sequence is STGGLFTDIT…YLGWIRDNMR (251 aa). Catalysis depends on charge relay system residues histidine 272 and aspartate 321. N-linked (GlcNAc...) asparagine glycosylation occurs at asparagine 398. Serine 428 functions as the Charge relay system in the catalytic mechanism.

It belongs to the peptidase S1 family. Monomer.

It localises to the secreted. The enzyme catalyses Specific cleavage of Arg-|-Val bond in plasminogen to form plasmin.. With respect to regulation, activity toward plasminogen is stimulated in the presence of fibrin I. Its function is as follows. Probably essential to support the feeding habits of this exclusively haematophagous animal. Probable potent thrombolytic agent. The polypeptide is Salivary plasminogen activator alpha 2 (Desmodus rotundus (Vampire bat)).